Here is a 299-residue protein sequence, read N- to C-terminus: Probable lipid kinase YegS (299 aa).

Residues 2 to 133 (AEFPASLLIL…IDMAQVNKQT (132 aa)) enclose the DAGKc domain. ATP-binding positions include Thr-40, 66–72 (GDGTINE), and Thr-95. The Mg(2+) site is built by Leu-215, Asp-218, and Leu-220. Glu-271 serves as the catalytic Proton acceptor.

This sequence belongs to the diacylglycerol/lipid kinase family. YegS lipid kinase subfamily. Requires Mg(2+) as cofactor. It depends on Ca(2+) as a cofactor.

The protein resides in the cytoplasm. In terms of biological role, probably phosphorylates lipids; the in vivo substrate is unknown. The polypeptide is Probable lipid kinase YegS (Escherichia coli (strain 55989 / EAEC)).